The primary structure comprises 1236 residues: DNA-directed RNA polymerase subunit beta (1236 aa).

The interval 1193-1212 (PDVLDDDSYDQNNDEDIDEI) is disordered. The span at 1194-1212 (DVLDDDSYDQNNDEDIDEI) shows a compositional bias: acidic residues.

The protein belongs to the RNA polymerase beta chain family. In terms of assembly, the RNAP catalytic core consists of 2 alpha, 1 beta, 1 beta' and 1 omega subunit. When a sigma factor is associated with the core the holoenzyme is formed, which can initiate transcription.

The enzyme catalyses RNA(n) + a ribonucleoside 5'-triphosphate = RNA(n+1) + diphosphate. DNA-dependent RNA polymerase catalyzes the transcription of DNA into RNA using the four ribonucleoside triphosphates as substrates. This chain is DNA-directed RNA polymerase subunit beta, found in Clostridium beijerinckii (strain ATCC 51743 / NCIMB 8052) (Clostridium acetobutylicum).